An 88-amino-acid chain; its full sequence is Elongation factor 1-beta (88 aa).

The protein belongs to the EF-1-beta/EF-1-delta family.

Its function is as follows. Promotes the exchange of GDP for GTP in EF-1-alpha/GDP, thus allowing the regeneration of EF-1-alpha/GTP that could then be used to form the ternary complex EF-1-alpha/GTP/AAtRNA. The sequence is that of Elongation factor 1-beta (ef1b) from Archaeoglobus fulgidus (strain ATCC 49558 / DSM 4304 / JCM 9628 / NBRC 100126 / VC-16).